The primary structure comprises 129 residues: Glycine cleavage system H protein (129 aa).

One can recognise a Lipoyl-binding domain in the interval 24-106 (TYTVGITEHA…YADGWIFKIK (83 aa)). An N6-lipoyllysine modification is found at lysine 65.

The protein belongs to the GcvH family. As to quaternary structure, the glycine cleavage system is composed of four proteins: P, T, L and H. Requires (R)-lipoate as cofactor.

Its function is as follows. The glycine cleavage system catalyzes the degradation of glycine. The H protein shuttles the methylamine group of glycine from the P protein to the T protein. The chain is Glycine cleavage system H protein from Salmonella arizonae (strain ATCC BAA-731 / CDC346-86 / RSK2980).